Reading from the N-terminus, the 229-residue chain is Probable ribonuclease H (229 aa).

Positions 42–164 (LQDISLEFDK…ADFLANSAAK (123 aa)) constitute an RNase H type-1 domain. 3 residues coordinate a divalent metal cation: E60, D87, and D156.

Belongs to the RNase H family. It depends on a divalent metal cation as a cofactor.

It carries out the reaction Endonucleolytic cleavage to 5'-phosphomonoester.. In terms of biological role, endonuclease that specifically degrades the RNA of RNA-DNA hybrids. The chain is Probable ribonuclease H (RNH1) from Acanthamoeba polyphaga mimivirus (APMV).